Reading from the N-terminus, the 261-residue chain is Sepiapterin reductase (261 aa).

At Met-1 the chain carries N-acetylmethionine. 14 to 20 (GASRGFG) contacts NADP(+). Ser-32 carries the post-translational modification Phosphoserine. NADP(+)-binding positions include 42-43 (RN) and 69-70 (DL). Phosphoserine is present on Ser-103. Residues 157–158 (SL) and Tyr-170 each bind substrate. Lys-174 provides a ligand contact to NADP(+). Gly-199 contacts substrate. NADP(+) is bound at residue 201-206 (LDTDMQ). Ser-213 is modified (phosphoserine; by CaMK2; in vitro). A substrate-binding site is contributed by Asp-257.

This sequence belongs to the sepiapterin reductase family. As to quaternary structure, homodimer. Post-translationally, in vitro phosphorylation of Ser-213 by CaMK2 does not change kinetic parameters.

It localises to the cytoplasm. It carries out the reaction L-erythro-7,8-dihydrobiopterin + NADP(+) = L-sepiapterin + NADPH + H(+). It catalyses the reaction (6R)-L-erythro-5,6,7,8-tetrahydrobiopterin + 2 NADP(+) = 6-pyruvoyl-5,6,7,8-tetrahydropterin + 2 NADPH + 2 H(+). Functionally, catalyzes the final one or two reductions in tetra-hydrobiopterin biosynthesis to form 5,6,7,8-tetrahydrobiopterin. The polypeptide is Sepiapterin reductase (SPR) (Homo sapiens (Human)).